Here is a 407-residue protein sequence, read N- to C-terminus: 3-oxoacyl-[acyl-carrier-protein] synthase 1 (407 aa).

Positions 1 to 406 (MKRVVITGFG…GTNVSLILKK (406 aa)) constitute a Ketosynthase family 3 (KS3) domain. Catalysis depends on for beta-ketoacyl synthase activity residues Cys164, His300, and His336.

This sequence belongs to the thiolase-like superfamily. Beta-ketoacyl-ACP synthases family. Homodimer.

It is found in the cytoplasm. It catalyses the reaction a fatty acyl-[ACP] + malonyl-[ACP] + H(+) = a 3-oxoacyl-[ACP] + holo-[ACP] + CO2. The enzyme catalyses (3Z)-decenoyl-[ACP] + malonyl-[ACP] + H(+) = 3-oxo-(5Z)-dodecenoyl-[ACP] + holo-[ACP] + CO2. It functions in the pathway lipid metabolism; fatty acid biosynthesis. Its function is as follows. Involved in the type II fatty acid elongation cycle. Catalyzes the elongation of a wide range of acyl-ACP by the addition of two carbons from malonyl-ACP to an acyl acceptor. Can also use unsaturated fatty acids. Catalyzes a key reaction in unsaturated fatty acid (UFA) synthesis, the elongation of the cis-3-decenoyl-ACP produced by FabA. This chain is 3-oxoacyl-[acyl-carrier-protein] synthase 1 (fabB), found in Buchnera aphidicola subsp. Schizaphis graminum (strain Sg).